Consider the following 319-residue polypeptide: GATA transcription factor 18 (319 aa).

The span at 1–15 (MPDAAAAAAAAQDAD) shows a compositional bias: low complexity. The tract at residues 1–74 (MPDAAAAAAA…AAPEPVSALL (74 aa)) is disordered. The segment covering 31–60 (DNDDDDGDDGTEEDEEEDDDEEGDEEELPP) has biased composition (acidic residues). In terms of domain architecture, Tify spans 74–109 (LPGSPNQLTLLFQGEVYVFESVTPEKVQAVLLLLGR). A CCT domain is found at 143 to 185 (RVASLIRFREKRKERNFDKKIRYAVRKEVALRMQRRKGQFAGR). Residues 215–242 (CQNCGTSEKMTPAMRRGPAGPRTLCNAC) form a GATA-type zinc finger. The disordered stretch occupies residues 292–319 (ITASHGEVMGDSTPANEAEIGAPKAQSQ).

It belongs to the type IV zinc-finger family. Class C subfamily.

It localises to the nucleus. In terms of biological role, transcriptional activator that specifically binds 5'-GATA-3' or 5'-GAT-3' motifs within gene promoters. This is GATA transcription factor 18 from Oryza sativa subsp. japonica (Rice).